The following is a 496-amino-acid chain: Glycylpeptide N-tetradecanoyltransferase 1 (496 aa).

The disordered stretch occupies residues 1-81; it reads MADESETAVK…DSTQDQPVKM (81 aa). Phosphoserine occurs at positions 31 and 47. The span at 55-66 shows a compositional bias: basic residues; sequence KKKKKKQKKKKE. A Phosphoserine modification is found at Ser-83. Positions 118, 119, 120, 247, 248, 249, 250, 256, 258, 259, and 260 each coordinate tetradecanoyl-CoA.

Belongs to the NMT family.

The protein localises to the cytoplasm. It localises to the cytosol. It is found in the membrane. It catalyses the reaction N-terminal glycyl-[protein] + tetradecanoyl-CoA = N-tetradecanoylglycyl-[protein] + CoA + H(+). The catalysed reaction is N-terminal glycyl-L-lysyl-[protein] + tetradecanoyl-CoA = N-terminal glycyl-(N(6)-tetradecanoyl)-L-lysyl-[protein] + CoA + H(+). Functionally, adds a myristoyl group to the N-terminal glycine residue of certain cellular and viral proteins. Also able to mediate N-terminal lysine myristoylation of proteins: catalyzes myristoylation of ARF6 on both 'Gly-2' and 'Lys-3'. Lysine myristoylation is required to maintain ARF6 on membranes during the GTPase cycle. The protein is Glycylpeptide N-tetradecanoyltransferase 1 (Nmt1) of Rattus norvegicus (Rat).